The primary structure comprises 523 residues: Type 2 DNA topoisomerase 6 subunit B (523 aa).

Residues Asn48, Asp80, 101-102 (SK), 110-117 (GQQGLGCS), and Lys436 contribute to the ATP site.

The protein belongs to the TOP6B family. As to quaternary structure, homodimer. Heterotetramer of two Top6A and two Top6B chains.

The enzyme catalyses ATP-dependent breakage, passage and rejoining of double-stranded DNA.. Functionally, relaxes both positive and negative superturns and exhibits a strong decatenase activity. This is Type 2 DNA topoisomerase 6 subunit B from Methanothermobacter thermautotrophicus (strain ATCC 29096 / DSM 1053 / JCM 10044 / NBRC 100330 / Delta H) (Methanobacterium thermoautotrophicum).